We begin with the raw amino-acid sequence, 387 residues long: MTVLKMTDLDLQGKRVLIREDLNVPVKDGVVASDARILAALPTIKLALEKGAAVMVCSHLGRPTEGEFSAENSLKPVADYLSKALGRDVPLVADYLDGVSVQAGELVLFENVRFNKGEKKNADELAQKYAALCDVFVMDAFGTAHRAEGSTHGVAKFAKVAAAGPLLAAELDALGKALKAPAKPMAAIVAGSKVSTKLDVLNSLSSVCDQLIVGGGIANTFLAAAGHPVGKSLYEPDLVDTAKAIAAKVSVPLPVDVVVAKEFAETAEATVKAIADVAADDMILDIGPQTAANFAELLKSSKTILWNGPVGVFEFDQFGNGTKVLAKAIADSAAFSIAGGGDTLAAIDKYGVSKEISYISTGGGAFLEFVEGKVLPAVAILEERAKA.

Substrate is bound by residues aspartate 21–asparagine 23, arginine 36, histidine 59–arginine 62, arginine 113, and arginine 146. ATP is bound by residues lysine 197, glutamate 314, and glycine 340–threonine 343.

This sequence belongs to the phosphoglycerate kinase family. As to quaternary structure, monomer.

It localises to the cytoplasm. The enzyme catalyses (2R)-3-phosphoglycerate + ATP = (2R)-3-phospho-glyceroyl phosphate + ADP. The protein operates within carbohydrate degradation; glycolysis; pyruvate from D-glyceraldehyde 3-phosphate: step 2/5. The polypeptide is Phosphoglycerate kinase (Pseudomonas putida (strain GB-1)).